Consider the following 312-residue polypeptide: Small kinetochore-associated protein (312 aa).

Positions 1–13 (MATHKAEAQETDF) are enriched in basic and acidic residues. Disordered regions lie at residues 1–32 (MATH…PSSR), 55–176 (LKRS…KDKN), and 221–242 (KGLN…DPTD). A compositionally biased stretch (polar residues) spans 75-84 (RPTTMASSKT). 2 stretches are compositionally biased toward basic and acidic residues: residues 131-143 (DVTK…RENG) and 166-176 (QKPEEDLKDKN). The segment at 156 to 312 (IRSSYKPLSK…LEEMEQLLEM (157 aa)) is interaction with SPAG5. Residues 169–210 (EEDLKDKNELLEAVNKQLHQKLTETQGELKDLTQKVELLEKF) are a coiled coil. Residues 246 to 288 (LLETLKDELKLFNETAKKQMEELQALKVKLKLKEKERIQFLEQ) adopt a coiled-coil conformation.

Part of an astrin (SPAG5)-kinastrin (SKAP) complex containing KNSTRN, SPAG5, PLK1, DYNLL1 and SGO2. Interacts with SPAG5. Directly binds to microtubules, although at relatively low affinity. Interacts with CENPE; this interaction greatly favors microtubule-binding. Interacts with DSN1/MIS13; leading to localization to kinetochores. Interacts with MAPRE1/EB1; leading to localization to the microtubule plus ends. Interacts with PRPF19. Interacts with DYNLL1. Interacts with MAP4.

The protein localises to the nucleus. The protein resides in the chromosome. Its subcellular location is the centromere. It localises to the kinetochore. It is found in the cytoplasm. The protein localises to the cytoskeleton. The protein resides in the spindle pole. Its subcellular location is the microtubule organizing center. Functionally, essential component of the mitotic spindle required for faithful chromosome segregation and progression into anaphase. Promotes the metaphase-to-anaphase transition and is required for chromosome alignment, normal timing of sister chromatid segregation, and maintenance of spindle pole architecture. The astrin (SPAG5)-kinastrin (SKAP) complex promotes stable microtubule-kinetochore attachments. Required for kinetochore oscillations and dynamics of microtubule plus-ends during live cell mitosis, possibly by forming a link between spindle microtubule plus-ends and mitotic chromosomes to achieve faithful cell division. The chain is Small kinetochore-associated protein (Knstrn) from Rattus norvegicus (Rat).